Consider the following 188-residue polypeptide: Archaemetzincin (188 aa).

Histidine 137 provides a ligand contact to Zn(2+). Glutamate 138 acts as the Proton acceptor in catalysis. Zn(2+)-binding residues include histidine 141, histidine 147, cysteine 148, cysteine 153, cysteine 172, and cysteine 175.

Belongs to the peptidase M54 family. In terms of assembly, monomer. Zn(2+) serves as cofactor.

Its function is as follows. Probable zinc metalloprotease whose natural substrate is unknown. This chain is Archaemetzincin, found in Pyrococcus horikoshii (strain ATCC 700860 / DSM 12428 / JCM 9974 / NBRC 100139 / OT-3).